Reading from the N-terminus, the 351-residue chain is Homeobox-leucine zipper protein HOX23 (351 aa).

Residues 34-128 (LQDHAHGGHG…SFESGNKLEP (95 aa)) form a disordered region. Positions 56–65 (SPFLPDLAMD) are enriched in low complexity. A DNA-binding region (homeobox) is located at residues 101–160 (GGEKKRRLSVEQVRTLERSFESGNKLEPERKAQLARALGLQPRQVAIWFQNRRARWKTKQ). The span at 114–128 (RTLERSFESGNKLEP) shows a compositional bias: basic and acidic residues. The interval 159–203 (KQLEKDFDALRRQLDAARAENDALLSLNSKLHAEIVALKGGAAAA) is leucine-zipper. Residues 227-263 (EASCSNRSENSSEINLDISRPAPPPPPPPANESPVNR) form a disordered region. Positions 228-240 (ASCSNRSENSSEI) are enriched in polar residues. Pro residues predominate over residues 247–257 (PAPPPPPPPAN).

Belongs to the HD-ZIP homeobox family. Class I subfamily. As to expression, expressed in seedlings, roots, stems, leaf sheaths and panicles.

It is found in the nucleus. Probable transcription factor. The protein is Homeobox-leucine zipper protein HOX23 (HOX23) of Oryza sativa subsp. indica (Rice).